A 122-amino-acid polypeptide reads, in one-letter code: Large ribosomal subunit protein uL14 (122 aa).

The protein belongs to the universal ribosomal protein uL14 family. In terms of assembly, part of the 50S ribosomal subunit. Forms a cluster with proteins L3 and L19. In the 70S ribosome, L14 and L19 interact and together make contacts with the 16S rRNA in bridges B5 and B8.

In terms of biological role, binds to 23S rRNA. Forms part of two intersubunit bridges in the 70S ribosome. The sequence is that of Large ribosomal subunit protein uL14 from Citrifermentans bemidjiense (strain ATCC BAA-1014 / DSM 16622 / JCM 12645 / Bem) (Geobacter bemidjiensis).